The chain runs to 87 residues: MSERNDRKVYVGKVVSDKMDKTITVLVETYKTHKLYGKRVKYSKKYKTHDENNSAKLGDIVKIQETRPLSATKRFRIVEIVEESVII.

The protein belongs to the universal ribosomal protein uS17 family. As to quaternary structure, part of the 30S ribosomal subunit.

In terms of biological role, one of the primary rRNA binding proteins, it binds specifically to the 5'-end of 16S ribosomal RNA. The polypeptide is Small ribosomal subunit protein uS17 (Staphylococcus aureus (strain Mu3 / ATCC 700698)).